The primary structure comprises 426 residues: Glutamate-1-semialdehyde 2,1-aminomutase (426 aa).

Lys-265 carries the N6-(pyridoxal phosphate)lysine modification.

It belongs to the class-III pyridoxal-phosphate-dependent aminotransferase family. HemL subfamily. As to quaternary structure, homodimer. Pyridoxal 5'-phosphate is required as a cofactor.

It is found in the cytoplasm. It carries out the reaction (S)-4-amino-5-oxopentanoate = 5-aminolevulinate. It participates in porphyrin-containing compound metabolism; protoporphyrin-IX biosynthesis; 5-aminolevulinate from L-glutamyl-tRNA(Glu): step 2/2. The chain is Glutamate-1-semialdehyde 2,1-aminomutase from Aliarcobacter butzleri (strain RM4018) (Arcobacter butzleri).